Here is a 148-residue protein sequence, read N- to C-terminus: Cytochrome c oxidase subunit 6, mitochondrial (148 aa).

The transit peptide at 1-40 (MLSRAIFRNPVINRTLLRARPGAYHATRLTKNTFIQSRKY) directs the protein to the mitochondrion.

The protein belongs to the cytochrome c oxidase subunit 5A family. Component of the cytochrome c oxidase (complex IV, CIV), a multisubunit enzyme composed of 12 subunits. The complex is composed of a catalytic core of 3 subunits COX1, COX2 and COX3, encoded in the mitochondrial DNA, and 9 supernumerary subunits COX4, COX5A (or COX5B), COX6, COX7, COX8, COX9, COX12, COX13 and COX26, which are encoded in the nuclear genome. The complex exists as a monomer or a dimer and forms supercomplexes (SCs) in the inner mitochondrial membrane with a dimer of ubiquinol-cytochrome c oxidoreductase (cytochrome b-c1 complex, complex III, CIII), resulting in 2 different assemblies (supercomplexes III(2)IV and III(2)IV(2)). COX26 interacts with COX1, COX2, COX6 and COX9.

Its subcellular location is the mitochondrion inner membrane. It functions in the pathway energy metabolism; oxidative phosphorylation. Its function is as follows. Component of the cytochrome c oxidase, the last enzyme in the mitochondrial electron transport chain which drives oxidative phosphorylation. The respiratory chain contains 3 multisubunit complexes succinate dehydrogenase (complex II, CII), ubiquinol-cytochrome c oxidoreductase (cytochrome b-c1 complex, complex III, CIII) and cytochrome c oxidase (complex IV, CIV), that cooperate to transfer electrons derived from NADH and succinate to molecular oxygen, creating an electrochemical gradient over the inner membrane that drives transmembrane transport and the ATP synthase. Cytochrome c oxidase is the component of the respiratory chain that catalyzes the reduction of oxygen to water. Electrons originating from reduced cytochrome c in the intermembrane space (IMS) are transferred via the dinuclear copper A center (CU(A)) of COX2 and heme A of COX1 to the active site in COX1, a binuclear center (BNC) formed by heme A3 and copper B (CU(B)). The BNC reduces molecular oxygen to 2 water molecules using 4 electrons from cytochrome c in the IMS and 4 protons from the mitochondrial matrix. COX6 may stabilize the region of CIV at the interface with CIII, supporting a role in formation or stability of the CIII(2)IV(2) SC. The protein is Cytochrome c oxidase subunit 6, mitochondrial (COX6) of Saccharomyces cerevisiae (strain ATCC 204508 / S288c) (Baker's yeast).